A 699-amino-acid polypeptide reads, in one-letter code: Transcription factor MYC2 (699 aa).

Residues 25–60 are disordered; that stretch reads PWGAASTPPPPPPPPHHHHQQQQQQVLPPPAAAPAA. Residues 93–158 form a JAZ-interaction domain region; it reads IDVSTGASLL…AAPDEAVEEE (66 aa). The interval 290–530 is disordered; the sequence is DISVSKPPPP…EPLNHVEAER (241 aa). The segment covering 306-321 has biased composition (polar residues); sequence HFENGSTSTLTENPSP. 2 stretches are compositionally biased toward low complexity: residues 335 to 349 and 387 to 412; these read PQRQ…QAQQ and SSSG…PGSL. Polar residues-rich tracts occupy residues 413–449 and 459–472; these read FSQH…NNHP and SFSS…STGT. Residues 478-494 are compositionally biased toward basic and acidic residues; the sequence is SESDHSDLEASVREVES. The Nuclear localization signal signature appears at 506–514; it reads KRPRKRGRK. Positions 507 to 516 are enriched in basic residues; it reads RPRKRGRKPA. Basic and acidic residues predominate over residues 517–530; it reads NGREEPLNHVEAER. Residues 520-533 form a basic motif; degenerate region; the sequence is EEPLNHVEAERQRR. Positions 520-569 constitute a bHLH domain; sequence EEPLNHVEAERQRREKLNQRFYALRAVVPNVSKMDKASLLGDAISYINEL. A helix-loop-helix motif region spans residues 534-569; it reads EKLNQRFYALRAVVPNVSKMDKASLLGDAISYINEL. The segment at 582-611 is disordered; sequence TLQSQMESLKKERDARPPAPSGGGGDGGAR.

It belongs to the bHLH protein family. Interacts with TIFY3/JAZ1. In terms of tissue distribution, highly expressed in spikelets and floral organs.

It is found in the nucleus. Its function is as follows. Transcriptional activator involved in jasmonate (JA) signaling pathway during spikelet development. Binds to the G2 region G-box (5'-CACGTG-3') of the MADS1 promoter and thus directly regulates the expression of MADS1. Its function in MADS1 activation is abolished by TIFY3/JAZ1 which directly target MYC2 during spikelet development. This chain is Transcription factor MYC2, found in Oryza sativa subsp. japonica (Rice).